Here is a 412-residue protein sequence, read N- to C-terminus: uncharacterized protein (412 aa).

Helical transmembrane passes span 17–37 (LLLA…ELVI), 54–74 (VLAL…PLLV), 91–111 (MIFI…FFFL), 112–132 (GRAL…AVVG), 146–166 (LIVS…SFIG), 173–193 (WTFW…LLEM), 225–245 (VYIT…SFLG), 257–277 (TAAG…VITG), 299–319 (LLAC…SLFI), 346–366 (VMVF…ALMG), and 375–395 (AAVG…SVFA).

This sequence belongs to the major facilitator superfamily.

The protein resides in the cell membrane. This is an uncharacterized protein from Bacillus subtilis (strain 168).